A 171-amino-acid chain; its full sequence is 3-hydroxydecanoyl-[acyl-carrier-protein] dehydratase (171 aa).

The active site involves His71.

This sequence belongs to the thioester dehydratase family. FabA subfamily. As to quaternary structure, homodimer.

Its subcellular location is the cytoplasm. It catalyses the reaction a (3R)-hydroxyacyl-[ACP] = a (2E)-enoyl-[ACP] + H2O. The enzyme catalyses (3R)-hydroxydecanoyl-[ACP] = (2E)-decenoyl-[ACP] + H2O. The catalysed reaction is (2E)-decenoyl-[ACP] = (3Z)-decenoyl-[ACP]. The protein operates within lipid metabolism; fatty acid biosynthesis. Functionally, necessary for the introduction of cis unsaturation into fatty acids. Catalyzes the dehydration of (3R)-3-hydroxydecanoyl-ACP to E-(2)-decenoyl-ACP and then its isomerization to Z-(3)-decenoyl-ACP. Can catalyze the dehydratase reaction for beta-hydroxyacyl-ACPs with saturated chain lengths up to 16:0, being most active on intermediate chain length. In Sinorhizobium medicae (strain WSM419) (Ensifer medicae), this protein is 3-hydroxydecanoyl-[acyl-carrier-protein] dehydratase.